A 1210-amino-acid chain; its full sequence is Multimerin-1 (1210 aa).

The signal sequence occupies residues M1–R19. A disordered region spans residues A57–K102. Residues Q80–P92 show a composition bias toward low complexity. N133 carries an N-linked (GlcNAc...) asparagine glycan. The span at S143 to S155 shows a compositional bias: polar residues. The segment at S143–T190 is disordered. N161 is a glycosylation site (N-linked (GlcNAc...) asparagine). The segment covering S163–R176 has biased composition (basic and acidic residues). Residues N177–T189 show a composition bias toward polar residues. Residues G192–L267 enclose the EMI domain. Disulfide bonds link C196/C257, C222/C230, and C256/C265. The O-linked (Fuc) threonine glycan is linked to T201. A glycan (O-linked (Fuc) threonine) is linked at T250. Residues A276–C299 form a disordered region. A coiled-coil region spans residues A303–N338. N-linked (GlcNAc...) asparagine glycans are attached at residues N328, N415, N491, N525, N560, N602, N712, N765, N810, N822, N903, N915, N963, and N1000. The stretch at L564–Q690 forms a coiled coil. The stretch at F809 to G846 forms a coiled coil. The region spanning E1023 to T1059 is the EGF-like domain. Cystine bridges form between C1027-C1038, C1032-C1047, and C1049-C1058. O-linked (Fuc) threonine glycosylation is present at T1037. The region spanning R1078–T1210 is the C1q domain.

In terms of assembly, multimeric. Composed of varying sized, disulfide-linked multimers, the smallest of which is a homotrimer. Proteolysis of the promultimerin in the N-terminal region, leads to the mature p155 form that is stored in platelets. Interacts with factor V/Va. Post-translationally, extensively N-glycosylated. In terms of processing, O-fucosylated within the EMI domain (at Thr-201 and Thr-250) by FUT10/POFUT3 and FUT11/POFUT4. O-fucosylation at Thr-201 and Thr-1037 are required for facilitating protein folding and secretion.

Its subcellular location is the secreted. Functionally, carrier protein for platelet (but not plasma) factor V/Va. Plays a role in the storage and stabilization of factor V in platelets. Upon release following platelet activation, may limit platelet and plasma factor Va-dependent thrombin generation. Ligand for integrin alpha-IIb/beta-3 and integrin alpha-V/beta-3 on activated platelets, and may function as an extracellular matrix or adhesive protein. The protein is Multimerin-1 of Mus musculus (Mouse).